The chain runs to 396 residues: KiSS-1 receptor (396 aa).

At 1–43 (MATEATLAPNVTWWAPSNASGCPGCGVNASDDPGSAPRPLDAW) the chain is on the extracellular side. N-linked (GlcNAc...) asparagine glycans are attached at residues N10, N18, and N28. Residues 44–66 (LVPLFFATLMLLGLVGNSLVIYV) traverse the membrane as a helical segment. Residues 67-78 (ICRHKHMQTVTN) are Cytoplasmic-facing. The chain crosses the membrane as a helical span at residues 79-101 (FYIANLAATDVTFLLCCVPFTAL). Over 102 to 116 (LYPLPAWVLGDFMCK) the chain is Extracellular. A disulfide bond links C115 and C191. Residues 117-138 (FVNYIQQVSVQATCATLTAMSV) traverse the membrane as a helical segment. Over 139–157 (DRWYVTVFPLRALHRRTPR) the chain is Cytoplasmic. A helical transmembrane segment spans residues 158–180 (LALAVSLSIWVGSAAVSAPVLAL). Residues 181–203 (HRLSPGPRTYCSEAFPSRALERA) are Extracellular-facing. Residues 204–224 (FALYNLLALYLLPLLATCACY) traverse the membrane as a helical segment. Residues 225–260 (GAMLRHLGRAAVRPAPTDGALQGQLLAQRAGAVRTK) are Cytoplasmic-facing. A helical membrane pass occupies residues 261-283 (VSRLVAAVVLLFAACWGPIQLFL). Residues 284 to 305 (VLQALGPSGAWHPRSYAAYAVK) lie on the Extracellular side of the membrane. Residues 306–330 (IWAHCMSYSNSALNPLLYAFLGSHF) traverse the membrane as a helical segment. Over 331–396 (RQAFCRVCPC…CAQSERTASL (66 aa)) the chain is Cytoplasmic. Residues 349–396 (HTSAHSDRAATHTVPHSRAAHPVRIRSPEPGNPVVRSPCAQSERTASL) form a disordered region. Polar residues predominate over residues 387–396 (CAQSERTASL).

This sequence belongs to the G-protein coupled receptor 1 family. In terms of tissue distribution, highest level in the heart and 15- and 17-day embryos. Low level in other tissues. Colocalized with gonadotropin-releasing hormone (GnRH) neurons in the hypothalamus.

It is found in the cell membrane. Receptor for metastin (kisspeptin-52 or kp-52), a C-terminally amidated peptide of KiSS1. KiSS1 is a metastasis suppressor protein. Activation of the receptor inhibits cell proliferation and cell migration, key characteristics of tumor metastasis. The receptor is essential for normal gonadotropin-released hormone physiology and for puberty. The hypothalamic KiSS1/KISS1R system is a pivotal factor in central regulation of the gonadotropic axis at puberty and in adulthood. Analysis of the transduction pathways activated by the receptor identifies coupling to phospholipase C and intracellular calcium release through pertussis toxin-insensitive G(q) proteins. In Mus musculus (Mouse), this protein is KiSS-1 receptor (Kiss1r).